The chain runs to 96 residues: Small ribosomal subunit protein bS6 (96 aa).

This sequence belongs to the bacterial ribosomal protein bS6 family.

In terms of biological role, binds together with bS18 to 16S ribosomal RNA. The protein is Small ribosomal subunit protein bS6 of Bacillus cereus (strain G9842).